We begin with the raw amino-acid sequence, 540 residues long: Chaperonin GroEL (540 aa).

Residues 29–32 (TLGP), 86–90 (DGTTT), Gly413, 476–478 (NAA), and Asp492 contribute to the ATP site.

The protein belongs to the chaperonin (HSP60) family. Forms a cylinder of 14 subunits composed of two heptameric rings stacked back-to-back. Interacts with the co-chaperonin GroES.

The protein resides in the cytoplasm. It catalyses the reaction ATP + H2O + a folded polypeptide = ADP + phosphate + an unfolded polypeptide.. Together with its co-chaperonin GroES, plays an essential role in assisting protein folding. The GroEL-GroES system forms a nano-cage that allows encapsulation of the non-native substrate proteins and provides a physical environment optimized to promote and accelerate protein folding. This Streptococcus constellatus protein is Chaperonin GroEL.